We begin with the raw amino-acid sequence, 207 residues long: Large ribosomal subunit protein bL25 (207 aa).

The disordered stretch occupies residues 185–207 (DLEEETGEAAAEAEAPAEEGAES).

The protein belongs to the bacterial ribosomal protein bL25 family. CTC subfamily. Part of the 50S ribosomal subunit; part of the 5S rRNA/L5/L18/L25 subcomplex. Contacts the 5S rRNA. Binds to the 5S rRNA independently of L5 and L18.

In terms of biological role, this is one of the proteins that binds to the 5S RNA in the ribosome where it forms part of the central protuberance. The protein is Large ribosomal subunit protein bL25 of Rhodococcus jostii (strain RHA1).